Reading from the N-terminus, the 212-residue chain is Transcription factor MYB8 (212 aa).

HTH myb-type domains follow at residues Lys9 to Leu61 and Arg62 to Leu116. 2 DNA-binding regions (H-T-H motif) span residues Trp37–Leu61 and Trp89–Ile112.

It localises to the nucleus. Its function is as follows. Transcription activator. This is Transcription factor MYB8 from Arabidopsis thaliana (Mouse-ear cress).